The following is a 452-amino-acid chain: Enolase (452 aa).

A (2R)-2-phosphoglycerate-binding site is contributed by Gln167. Glu209 acts as the Proton donor in catalysis. Asp250, Glu310, and Asp337 together coordinate Mg(2+). Positions 362, 391, 392, and 413 each coordinate (2R)-2-phosphoglycerate. Lys362 serves as the catalytic Proton acceptor.

The protein belongs to the enolase family. Mg(2+) is required as a cofactor.

Its subcellular location is the cytoplasm. It localises to the secreted. It is found in the cell surface. It carries out the reaction (2R)-2-phosphoglycerate = phosphoenolpyruvate + H2O. Its pathway is carbohydrate degradation; glycolysis; pyruvate from D-glyceraldehyde 3-phosphate: step 4/5. Catalyzes the reversible conversion of 2-phosphoglycerate (2-PG) into phosphoenolpyruvate (PEP). It is essential for the degradation of carbohydrates via glycolysis. The chain is Enolase from Mycoplasmopsis synoviae (strain 53) (Mycoplasma synoviae).